We begin with the raw amino-acid sequence, 842 residues long: Protein P (842 aa).

Residues 1 to 177 form a terminal protein domain (TP) region; that stretch reads MPLSYQHFRR…FCGSPYSWEQ (177 aa). A spacer region spans residues 178–345; the sequence is ELHHGAFLDG…YCLSHLVNLL (168 aa). A disordered region spans residues 186–273; it reads DGPSRMGEES…AKNIASRSAS (88 aa). The span at 223–239 shows a compositional bias: polar residues; sequence GPQSQQRPLDRSQQGRS. The tract at residues 346–689 is polymerase/reverse transcriptase domain (RT); it reads EDWGPCTEHG…YLNLYPVARQ (344 aa). One can recognise a Reverse transcriptase domain in the interval 356 to 599; it reads RHHIRIPRTP…YSLNFMGYVI (244 aa). Mg(2+) is bound by residues D428, D550, and D551.

The protein belongs to the hepadnaviridae P protein family.

It carries out the reaction DNA(n) + a 2'-deoxyribonucleoside 5'-triphosphate = DNA(n+1) + diphosphate. The catalysed reaction is Endonucleolytic cleavage to 5'-phosphomonoester.. Activated by host HSP70 and HSP40 in vitro to be able to bind the epsilon loop of the pgRNA. Because deletion of the RNase H region renders the protein partly chaperone-independent, the chaperones may be needed indirectly to relieve occlusion of the RNA-binding site by this domain. Inhibited by several reverse-transcriptase inhibitors: Lamivudine, Adefovir and Entecavir. In terms of biological role, multifunctional enzyme that converts the viral RNA genome into dsDNA in viral cytoplasmic capsids. This enzyme displays a DNA polymerase activity that can copy either DNA or RNA templates, and a ribonuclease H (RNase H) activity that cleaves the RNA strand of RNA-DNA heteroduplexes in a partially processive 3'- to 5'-endonucleasic mode. Neo-synthesized pregenomic RNA (pgRNA) are encapsidated together with the P protein, and reverse-transcribed inside the nucleocapsid. Initiation of reverse-transcription occurs first by binding the epsilon loop on the pgRNA genome, and is initiated by protein priming, thereby the 5'-end of (-)DNA is covalently linked to P protein. Partial (+)DNA is synthesized from the (-)DNA template and generates the relaxed circular DNA (RC-DNA) genome. After budding and infection, the RC-DNA migrates in the nucleus, and is converted into a plasmid-like covalently closed circular DNA (cccDNA). The activity of P protein does not seem to be necessary for cccDNA generation, and is presumably released from (+)DNA by host nuclear DNA repair machinery. The protein is Protein P of Homo sapiens (Human).